The sequence spans 378 residues: SWI/SNF-related matrix-associated actin-dependent regulator of chromatin subfamily B member 1 (378 aa).

Residues 1–106 (MIMALSKTFG…DEKYKAVSIS (106 aa)) are DNA-binding.

This sequence belongs to the SNF5 family. As to quaternary structure, component of the multiprotein chromatin-remodeling complexes SWI/SNF. Component of neural progenitors-specific chromatin remodeling complex (npBAF complex) and the neuron-specific chromatin remodeling complex (nBAF complex). Component of the BAF (SWI/SNF) chromatin remodeling complex. Component of the SWI/SNF-B (PBAF) chromatin remodeling complex. Binds to double-stranded DNA.

Its subcellular location is the nucleus. Involved in chromatin-remodeling. Core component of the BAF (SWI/SNF) complex. This ATP-dependent chromatin-remodeling complex plays important roles in cell proliferation and differentiation, in cellular antiviral activities and inhibition of tumor formation. Belongs to the neural progenitors-specific chromatin remodeling complex (npBAF complex) and the neuron-specific chromatin remodeling complex (nBAF complex) and may play a role in neural development. The polypeptide is SWI/SNF-related matrix-associated actin-dependent regulator of chromatin subfamily B member 1 (smarcb1) (Xenopus tropicalis (Western clawed frog)).